A 349-amino-acid polypeptide reads, in one-letter code: Protein AMBP (349 aa).

The signal sequence occupies residues 1–19; sequence MLGLGTLFLLLAACPASRA. The N-linked (GlcNAc...) asparagine glycan is linked to Asn35. Cys52 and Lys110 together coordinate 3-hydroxy-L-kynurenine. The cysteines at positions 90 and 187 are disulfide-linked. Residue Asn114 is glycosylated (N-linked (GlcNAc...) asparagine). Residues Lys136 and Lys148 each coordinate 3-hydroxy-L-kynurenine. O-linked (Xyl...) (chondroitin sulfate) serine glycosylation is present at Ser214. 6 cysteine pairs are disulfide-bonded: Cys230–Cys280, Cys239–Cys263, Cys255–Cys276, Cys286–Cys336, Cys295–Cys319, and Cys311–Cys332. 2 consecutive BPTI/Kunitz inhibitor domains span residues 230-280 and 286-336; these read CQLS…LQTC and CSLP…KEYC.

This sequence in the N-terminal section; belongs to the calycin superfamily. Lipocalin family. Monomer. Homodimer. In plasma, it occurs as a monomer or dimer and in covalently-linked complexes with immunoglobulin A (IgA), ALB/albumin and F2/prothrombin. Chromophore-bound alpha-1-microglobulin interacts with the constant region of immunoglobulin A. Chromophore-bound alpha-1-microglobulin interacts with ALB with molar ratio 2:1 and 1:1; this interaction does not prevent fatty acid binding to ALB. Interacts with F2/prothrombin (via N-terminus) with molar ratio 2:1 and 1:1; this interaction does not prevent the activation of prothrombin to thrombin. Interacts with NDUFAB1, a subunit of mitochondrial complex I. Interacts with FN1. In terms of assembly, I-alpha-I plasma protease inhibitors are assembled from one or two heavy chains (HC) and one light chain, bikunin. Inter-alpha-inhibitor (I-alpha-I) is composed of ITIH1/HC1, ITIH2/HC2 and bikunin, and pre-alpha-inhibitor (P-alpha-I) of ITIH3/HC3 and bikunin. Interacts with TNFAIP6 (via Link domain). As to quaternary structure, monomer. Also occurs as a complex with tryptase in mast cells. The precursor is proteolytically processed into separately functioning proteins. In terms of processing, 3-hydroxykynurenine, an oxidized tryptophan metabolite that is common in biological fluids, reacts with Cys-53, Lys-111, Lys-137, and Lys-149 to form heterogeneous polycyclic chromophores including hydroxanthommatin. The reaction by alpha-1-microglobulin is autocatalytic; the human protein forms chromophore even when expressed in insect and bacterial cells. The chromophore can react with accessible cysteines forming non-reducible thioether cross-links with other molecules of alpha-1-microglobulin or with other proteins such as Ig alpha-1 chain C region 'Cys-352'. Post-translationally, heavy chains are interlinked with bikunin via a chondroitin 4-sulfate bridge to the C-terminal aspartate. Proteolytically cleaved by PRSS3 at Kunitz domain 2. In terms of tissue distribution, expressed by the liver and secreted in plasma.

The protein localises to the secreted. It localises to the endoplasmic reticulum. It is found in the cytoplasm. Its subcellular location is the cytosol. The protein resides in the cell membrane. The protein localises to the nucleus membrane. It localises to the mitochondrion inner membrane. It is found in the extracellular space. Its subcellular location is the extracellular matrix. Functionally, antioxidant and tissue repair protein with reductase, heme-binding and radical-scavenging activities. Removes and protects against harmful oxidants and repairs macromolecules in intravascular and extravascular spaces and in intracellular compartments. Intravascularly, plays a regulatory role in red cell homeostasis by preventing heme- and reactive oxygen species-induced cell damage. Binds and degrades free heme to protect fetal and adult red blood cells from hemolysis. Reduces extracellular methemoglobin, a Fe3+ (ferric) form of hemoglobin that cannot bind oxygen, back to the Fe2+ (ferrous) form deoxyhemoglobin, which has oxygen-carrying potential. Upon acute inflammation, inhibits oxidation of low-density lipoprotein particles by MPO and limits vascular damage. Extravascularly, protects from oxidation products formed on extracellular matrix structures and cell membranes. Catalyzes the reduction of carbonyl groups on oxidized collagen fibers and preserves cellular and extracellular matrix ultrastructures. Importantly, counteracts the oxidative damage at blood-placenta interface, preventing leakage of free fetal hemoglobin into the maternal circulation. Intracellularly, has a role in maintaining mitochondrial redox homeostasis. Bound to complex I of the respiratory chain of mitochondria, may scavenge free radicals and preserve mitochondrial ATP synthesis. Protects renal tubule epithelial cells from heme-induced oxidative damage to mitochondria. Reduces cytochrome c from Fe3+ (ferric) to the Fe2+ (ferrous) state through formation of superoxide anion radicals in the presence of ascorbate or NADH/NADPH electron donor cofactors, ascorbate being the preferred cofactor. Has a chaperone role in facilitating the correct folding of bikunin in the endoplasmic reticulum compartment. Kunitz-type serine protease inhibitor and structural component of extracellular matrix with a role in extracellular space remodeling and cell adhesion. Among others, has antiprotease activity toward kallikrein, a protease involved in airway inflammation; inhibits GZMK/granzyme, a granule-stored serine protease involved in NK and T cell cytotoxic responses; and inhibits PLG/plasmin, a protease required for activation of matrix metalloproteinases. As part of I-alpha-I complex, provides for the heavy chains to be transferred from I-alpha-I complex to hyaluronan in the presence of TNFAIP6, in a dynamic process that releases free bikunin and remodels extracellular matrix proteoglycan structures. Free bikunin, but not its heavy chain-bound form, acts as a potent protease inhibitor in airway secretions. Part of hyaluronan-rich extracellular matrix that surrounds oocyte during cumulus oophorus expansion, an indispensable process for proper ovulation. Also inhibits calcium oxalate crystallization. Its function is as follows. Kunitz-type serine protease inhibitor. Has high catalytic efficiency for F10/blood coagulation factor Xa and may act as an anticoagulant by inhibiting prothrombin activation. Inhibits trypsin and mast cell CMA1/chymase and tryptase proteases. The protein is Protein AMBP (AMBP) of Mesocricetus auratus (Golden hamster).